We begin with the raw amino-acid sequence, 303 residues long: Ribosomal RNA small subunit methyltransferase H (303 aa).

S-adenosyl-L-methionine is bound by residues 33–35 (GGH), Asp52, Phe78, Asp99, and Gln106.

It belongs to the methyltransferase superfamily. RsmH family.

The protein localises to the cytoplasm. It catalyses the reaction cytidine(1402) in 16S rRNA + S-adenosyl-L-methionine = N(4)-methylcytidine(1402) in 16S rRNA + S-adenosyl-L-homocysteine + H(+). In terms of biological role, specifically methylates the N4 position of cytidine in position 1402 (C1402) of 16S rRNA. In Phytoplasma australiense, this protein is Ribosomal RNA small subunit methyltransferase H.